A 521-amino-acid chain; its full sequence is NADH-quinone oxidoreductase subunit N (521 aa).

14 consecutive transmembrane segments (helical) span residues 15–35, 43–63, 98–118, 128–148, 150–170, 185–205, 227–247, 261–281, 303–323, 331–351, 363–383, 406–426, 442–462, and 485–505; these read LAPELILAAMFLILIVTDLIL, IIGWLSLAGLLLSLAAVIWRM, LLKIIFLIGTSLVVLLGLGST, AEFYYLLLPAAAGAMIMASSG, LVTLYIGLELLSITTYVLVGL, VVTGGIASAFVLFGMSYLYGV, ALVYVGFFFLIAGFGIKIAAA, PTPVSAFLAVIAKGAALAAVF, VFFALLVIAAAAMIAGTVSAL, LLALSGVANAGYLLVPIAISV, VFYLVAYLLMNVGAFAVVTVI, AAAMLIFILSFSGLPVTAGFF, WLVAIMVVSTVISYYFYFGII, and TVIWICAAATVALGVLPGPLM.

Belongs to the complex I subunit 2 family. NDH-1 is composed of 14 different subunits. Subunits NuoA, H, J, K, L, M, N constitute the membrane sector of the complex.

The protein resides in the cell membrane. It catalyses the reaction a quinone + NADH + 5 H(+)(in) = a quinol + NAD(+) + 4 H(+)(out). Functionally, NDH-1 shuttles electrons from NADH, via FMN and iron-sulfur (Fe-S) centers, to quinones in the respiratory chain. The immediate electron acceptor for the enzyme in this species is believed to be a menaquinone. Couples the redox reaction to proton translocation (for every two electrons transferred, four hydrogen ions are translocated across the cytoplasmic membrane), and thus conserves the redox energy in a proton gradient. This is NADH-quinone oxidoreductase subunit N from Paenibacillus sp. (strain JDR-2).